The following is a 215-amino-acid chain: Leucyl/phenylalanyl-tRNA--protein transferase (215 aa).

Belongs to the L/F-transferase family.

The protein resides in the cytoplasm. It catalyses the reaction N-terminal L-lysyl-[protein] + L-leucyl-tRNA(Leu) = N-terminal L-leucyl-L-lysyl-[protein] + tRNA(Leu) + H(+). The catalysed reaction is N-terminal L-arginyl-[protein] + L-leucyl-tRNA(Leu) = N-terminal L-leucyl-L-arginyl-[protein] + tRNA(Leu) + H(+). It carries out the reaction L-phenylalanyl-tRNA(Phe) + an N-terminal L-alpha-aminoacyl-[protein] = an N-terminal L-phenylalanyl-L-alpha-aminoacyl-[protein] + tRNA(Phe). Functions in the N-end rule pathway of protein degradation where it conjugates Leu, Phe and, less efficiently, Met from aminoacyl-tRNAs to the N-termini of proteins containing an N-terminal arginine or lysine. The polypeptide is Leucyl/phenylalanyl-tRNA--protein transferase (Campylobacter jejuni subsp. jejuni serotype O:2 (strain ATCC 700819 / NCTC 11168)).